The sequence spans 302 residues: Oxaloacetate decarboxylase 2 (302 aa).

Residue Ser50 coordinates substrate. A Mg(2+)-binding site is contributed by Asp88. Substrate is bound by residues Arg159 and His235.

Belongs to the isocitrate lyase/PEP mutase superfamily. Oxaloacetate decarboxylase family. Homotetramer; dimer of dimers. Mg(2+) is required as a cofactor.

It carries out the reaction oxaloacetate + H(+) = pyruvate + CO2. Catalyzes the decarboxylation of oxaloacetate into pyruvate. Seems to play a role in maintaining cellular concentrations of bicarbonate and pyruvate. This Pseudomonas putida (strain W619) protein is Oxaloacetate decarboxylase 2.